Here is a 269-residue protein sequence, read N- to C-terminus: Ubiquinone/menaquinone biosynthesis C-methyltransferase UbiE (269 aa).

S-adenosyl-L-methionine contacts are provided by residues Thr-92, Asp-113, and Asn-141–Ala-142.

This sequence belongs to the class I-like SAM-binding methyltransferase superfamily. MenG/UbiE family.

It carries out the reaction a 2-demethylmenaquinol + S-adenosyl-L-methionine = a menaquinol + S-adenosyl-L-homocysteine + H(+). The catalysed reaction is a 2-methoxy-6-(all-trans-polyprenyl)benzene-1,4-diol + S-adenosyl-L-methionine = a 5-methoxy-2-methyl-3-(all-trans-polyprenyl)benzene-1,4-diol + S-adenosyl-L-homocysteine + H(+). Its pathway is quinol/quinone metabolism; menaquinone biosynthesis; menaquinol from 1,4-dihydroxy-2-naphthoate: step 2/2. It functions in the pathway cofactor biosynthesis; ubiquinone biosynthesis. In terms of biological role, methyltransferase required for the conversion of demethylmenaquinol (DMKH2) to menaquinol (MKH2) and the conversion of 2-polyprenyl-6-methoxy-1,4-benzoquinol (DDMQH2) to 2-polyprenyl-3-methyl-6-methoxy-1,4-benzoquinol (DMQH2). The protein is Ubiquinone/menaquinone biosynthesis C-methyltransferase UbiE of Brucella melitensis biotype 2 (strain ATCC 23457).